The following is an 807-amino-acid chain: Probable phosphoketolase (807 aa).

Belongs to the XFP family. Thiamine diphosphate serves as cofactor.

In Mesorhizobium japonicum (strain LMG 29417 / CECT 9101 / MAFF 303099) (Mesorhizobium loti (strain MAFF 303099)), this protein is Probable phosphoketolase.